Consider the following 294-residue polypeptide: tRNA-cytidine(32) 2-sulfurtransferase (294 aa).

A PP-loop motif motif is present at residues 70–75; it reads SGGKDS. Residues Cys145, Cys148, and Cys236 each contribute to the [4Fe-4S] cluster site.

This sequence belongs to the TtcA family. Homodimer. Mg(2+) is required as a cofactor. Requires [4Fe-4S] cluster as cofactor.

Its subcellular location is the cytoplasm. It carries out the reaction cytidine(32) in tRNA + S-sulfanyl-L-cysteinyl-[cysteine desulfurase] + AH2 + ATP = 2-thiocytidine(32) in tRNA + L-cysteinyl-[cysteine desulfurase] + A + AMP + diphosphate + H(+). It participates in tRNA modification. In terms of biological role, catalyzes the ATP-dependent 2-thiolation of cytidine in position 32 of tRNA, to form 2-thiocytidine (s(2)C32). The sulfur atoms are provided by the cysteine/cysteine desulfurase (IscS) system. The polypeptide is tRNA-cytidine(32) 2-sulfurtransferase (Rhizobium meliloti (strain 1021) (Ensifer meliloti)).